The primary structure comprises 595 residues: MQIIEIREPEQADFKQERQIAVGIDFGTTNSLIAIAANRQVKVIKSIDDKELIPTTIDFTSNNFTIGNNKGLRSIKRLFGKTLKEILNTPALFSLVKDYLDVNSSELKLNFANKQLRVPEIAAEIFIYLKNQAEEQLKTNLTKAVITVPAHFNDAARGEVMLAAKIAGFEVLRLIAEPTAAAYAYGLNKNQKGCYLVYDLGGGTFDVSILNIQEGIFQVIATNGDNMLGGNDIDVVITQYLCNKFDLPNSIDTLQLAKKAKETLTYKDSFNNDNVSINKQTLEQLILPLVERTINIAQECLEQAGNPNIDGVILVGGATRIPLIKDELYKAFKIDILSDIDPDKAVVWGAALQAENLIAPHTNSLLIDVAPLSLGMELYGGIVEKIIMHNTPIPISVVKEFTTYVDNQTGIQFHILQGEREMAADCRSLARFELKGLPPMKAGYIRAEVTFSIDADGILSVSAYEKISNTSHAIEVKPNHGIDKTEIDIMLENAYKNAKIDYTTRLLQEAVIEAEALIFSIERAIAELTTLSSESEISIINSLLDNIKEAVHARDWILINNSIKEFKSKIKKSIDTKFNIIINDLLKGKNINQIK.

This sequence belongs to the heat shock protein 70 family.

Chaperone involved in the maturation of iron-sulfur cluster-containing proteins. Has a low intrinsic ATPase activity which is markedly stimulated by HscB. This Rickettsia africae (strain ESF-5) protein is Chaperone protein HscA homolog.